The following is a 63-amino-acid chain: Large ribosomal subunit protein uL29 (63 aa).

Belongs to the universal ribosomal protein uL29 family.

In Proteus mirabilis (strain HI4320), this protein is Large ribosomal subunit protein uL29.